Here is a 321-residue protein sequence, read N- to C-terminus: Glucokinase (321 aa).

Residue 8–13 coordinates ATP; that stretch reads GDVGGT.

Belongs to the bacterial glucokinase family.

Its subcellular location is the cytoplasm. It catalyses the reaction D-glucose + ATP = D-glucose 6-phosphate + ADP + H(+). The sequence is that of Glucokinase from Pectobacterium atrosepticum (strain SCRI 1043 / ATCC BAA-672) (Erwinia carotovora subsp. atroseptica).